A 240-amino-acid chain; its full sequence is Hairy and enhancer of split-related protein HELT (240 aa).

One can recognise a bHLH domain in the interval 10-65 (RTPVSHKVIEKRRRDRINRCLNELGKTVPMALAKQSSGKLEKAEILEMTVQYLRAL). An N6-acetyllysine modification is found at K48. Residues 86–121 (FHYGYHECMKNLVHYLTTVERMETKDTKYARILAFL) form the Orange domain.

This sequence belongs to the HEY family. In terms of assembly, self-associates. Interacts with HES5 and HEY2. Expressed in heart and testis.

Its subcellular location is the nucleus. Transcriptional repressor which binds preferentially to the canonical E box sequence 5'-CACGCG-3'. Required for the development of GABAergic neurons. The polypeptide is Hairy and enhancer of split-related protein HELT (Helt) (Mus musculus (Mouse)).